The primary structure comprises 128 residues: Sulfurtransferase TusD (128 aa).

The active-site Cysteine persulfide intermediate is C78.

It belongs to the DsrE/TusD family. Heterohexamer, formed by a dimer of trimers. The hexameric TusBCD complex contains 2 copies each of TusB, TusC and TusD. The TusBCD complex interacts with TusE.

Its subcellular location is the cytoplasm. In terms of biological role, part of a sulfur-relay system required for 2-thiolation of 5-methylaminomethyl-2-thiouridine (mnm(5)s(2)U) at tRNA wobble positions. Accepts sulfur from TusA and transfers it in turn to TusE. The chain is Sulfurtransferase TusD from Escherichia fergusonii (strain ATCC 35469 / DSM 13698 / CCUG 18766 / IAM 14443 / JCM 21226 / LMG 7866 / NBRC 102419 / NCTC 12128 / CDC 0568-73).